A 346-amino-acid chain; its full sequence is Cyclin-dependent kinase 7 (346 aa).

Residue alanine 2 is modified to N-acetylalanine. Serine 7 is modified (phosphoserine). Positions 12-295 constitute a Protein kinase domain; that stretch reads YEKLDFLGEG…ASQALKTKYF (284 aa). Residues 18 to 26 and lysine 41 contribute to the ATP site; that span reads LGEGQFATV. Aspartate 137 serves as the catalytic Proton acceptor. Serine 164 is subject to Phosphoserine; by CDK1 and CDK2. Position 170 is a phosphothreonine; by CDK2 (threonine 170).

It belongs to the protein kinase superfamily. CMGC Ser/Thr protein kinase family. CDC2/CDKX subfamily. Associates primarily with cyclin-H (CCNH) and MAT1 to form the CAK complex. CAK can further associate with the core-TFIIH to form the TFIIH basal transcription factor; this complex is sensitive to UV light. The CAK complex binds to p53/TP53 in response to DNA damage. Interacts with CDK2, SF1/NR5A1, PUF60 and PRKCI. Interacts with HINT1. Phosphorylation of Ser-164 during mitosis inactivates the enzyme. Phosphorylation of Thr-170 is required for activity. Phosphorylated at Ser-164 and Thr-170 by CDK2.

The protein localises to the nucleus. It is found in the cytoplasm. Its subcellular location is the perinuclear region. It carries out the reaction L-seryl-[protein] + ATP = O-phospho-L-seryl-[protein] + ADP + H(+). The catalysed reaction is L-threonyl-[protein] + ATP = O-phospho-L-threonyl-[protein] + ADP + H(+). The enzyme catalyses [DNA-directed RNA polymerase] + ATP = phospho-[DNA-directed RNA polymerase] + ADP + H(+). Its activity is regulated as follows. Phosphorylation at Thr-170 is required for enzymatic activity. The association of p53/TP53 to the CAK complex in response to DNA damage reduces kinase activity toward CDK2 and RNA polymerase II repetitive C-terminal domain (CTD), thus stopping cell cycle progression. Its function is as follows. Serine/threonine kinase involved in cell cycle control and in RNA polymerase II-mediated RNA transcription. Cyclin-dependent kinases (CDKs) are activated by the binding to a cyclin and mediate the progression through the cell cycle. Each different complex controls a specific transition between 2 subsequent phases in the cell cycle. Required for both activation and complex formation of CDK1/cyclin-B during G2-M transition, and for activation of CDK2/cyclins during G1-S transition (but not complex formation). CDK7 is the catalytic subunit of the CDK-activating kinase (CAK) complex. Phosphorylates SPT5/SUPT5H, SF1/NR5A1, POLR2A, p53/TP53, CDK1, CDK2, CDK4, CDK6 and CDK11B/CDK11. Initiates transcription by RNA polymerase II by mediating phosphorylation of POLR2A at 'Ser-5' of the repetitive C-terminal domain (CTD) when POLR2A is in complex with DNA, promoting dissociation from DNA and initiation. CAK activates the cyclin-associated kinases CDK1, CDK2, CDK4 and CDK6 by threonine phosphorylation, thus regulating cell cycle progression. CAK complexed to the core-TFIIH basal transcription factor activates RNA polymerase II by serine phosphorylation of the CTD of POLR2A, allowing its escape from the promoter and elongation of the transcripts. Its expression and activity are constant throughout the cell cycle. Upon DNA damage, triggers p53/TP53 activation by phosphorylation, but is inactivated in turn by p53/TP53; this feedback loop may lead to an arrest of the cell cycle and of the transcription, helping in cell recovery, or to apoptosis. Required for DNA-bound peptides-mediated transcription and cellular growth inhibition. This is Cyclin-dependent kinase 7 (Cdk7) from Mus musculus (Mouse).